Reading from the N-terminus, the 442-residue chain is UDP-N-acetylmuramate--L-alanine ligase (442 aa).

109-115 (GAHGKTS) serves as a coordination point for ATP.

Belongs to the MurCDEF family.

The protein resides in the cytoplasm. The catalysed reaction is UDP-N-acetyl-alpha-D-muramate + L-alanine + ATP = UDP-N-acetyl-alpha-D-muramoyl-L-alanine + ADP + phosphate + H(+). It functions in the pathway cell wall biogenesis; peptidoglycan biosynthesis. In terms of biological role, cell wall formation. This is UDP-N-acetylmuramate--L-alanine ligase from Streptococcus pyogenes serotype M18 (strain MGAS8232).